Consider the following 302-residue polypeptide: Zinc finger protein-like 1 homolog (302 aa).

Residues 1 to 43 (MGLCKCPKRLVTNQFCFEHRVNVCEHCMVQSHPKCIVQSYLQW) form a B box-type; degenerate zinc finger. The RING-type; atypical zinc finger occupies 53-101 (CNLCGTSLEQGECVRLVCYHVFHWDCLNARQAALPANTAPRGHQCPGCS). The segment at 168-233 (IHSGGERERG…RDDNKYQRRT (66 aa)) is disordered. Positions 198–208 (PPSSGDFNASS) are enriched in polar residues. S217 is modified (phosphoserine). The chain crosses the membrane as a helical span at residues 258 to 278 (WFLVLSGILAFVMFIYLLAWM).

It belongs to the ZFPL1 family.

The protein localises to the membrane. In Drosophila pseudoobscura pseudoobscura (Fruit fly), this protein is Zinc finger protein-like 1 homolog.